Reading from the N-terminus, the 132-residue chain is Large ribosomal subunit protein bL19 (132 aa).

The protein belongs to the bacterial ribosomal protein bL19 family.

Its function is as follows. This protein is located at the 30S-50S ribosomal subunit interface and may play a role in the structure and function of the aminoacyl-tRNA binding site. The polypeptide is Large ribosomal subunit protein bL19 (Methylobacterium radiotolerans (strain ATCC 27329 / DSM 1819 / JCM 2831 / NBRC 15690 / NCIMB 10815 / 0-1)).